The chain runs to 749 residues: Amyloid-beta A4 precursor protein-binding family A member 2 (749 aa).

3 disordered regions span residues 1–94 (MAHR…PEEE), 130–220 (DTDE…GDLE), and 238–344 (SMTS…NIPE). Ser11 is subject to Phosphoserine. Positions 70–80 (GDSSSDYVNNT) are enriched in polar residues. Acidic residues-rich tracts occupy residues 81 to 94 (SEEE…PEEE) and 131 to 142 (TDECQEAVEEWT). The segment at 185 to 270 (HYCASKEGYQ…SVEACPPIKA (86 aa)) is STXBP1-binding. Residue Ser208 is modified to Phosphoserine. Residues 238–247 (SMTSITSASE) show a composition bias toward polar residues. Residues 305 to 315 (RTPEERLKWPH) show a composition bias toward basic and acidic residues. The region spanning 368 to 555 (DGIIFAANYL…IINTQEMYND (188 aa)) is the PID domain. PDZ domains follow at residues 568 to 654 (ELQL…IVSC) and 659 to 734 (TVLI…TMPA).

Part of a multimeric complex containing STXBP1 and syntaxin-1. Binds to the cytoplasmic domain of amyloid-beta protein, and to the nuclear factor NF-kappa-B/p65 via its PDZ domain. Interacts with the N-terminal domain of NECAB3. As to expression, brain.

Its function is as follows. Putative function in synaptic vesicle exocytosis by binding to STXBP1, an essential component of the synaptic vesicle exocytotic machinery. May modulate processing of the amyloid-beta precursor protein (APP) and hence formation of APP-beta. The chain is Amyloid-beta A4 precursor protein-binding family A member 2 (APBA2) from Homo sapiens (Human).